A 282-amino-acid chain; its full sequence is MTKVFINGEFIDQNEAKVSYEDRGYVFGDGIYEYIRAYDGKLFTVTEHFERFIRSASEIQLDLGYTVEELIDVVRELLKVNNIQNGGIYIQATRGVAPRNHSFPTPEVKPVIMAFAKSYDRPYDDLENGINAATVEDIRWLRCDIKSLNLLGNVLAKEYAVKYNAGEAIQHRGETVTEGASSNVYAIKDGAIYTHPVNNYILNGITRKVIKWISEDEDIPFKEETFTVEFLKNADEVIVSSTSAEVTPVVKIDGEQVGDGKVGPVTRQLQEGFNKYIESRSS.

Y32 serves as a coordination point for substrate. R51 contacts pyridoxal 5'-phosphate. 2 residues coordinate substrate: R99 and H101. Residue K146 is the Proton acceptor of the active site. At K146 the chain carries N6-(pyridoxal phosphate)lysine. Residue E178 coordinates pyridoxal 5'-phosphate.

Belongs to the class-IV pyridoxal-phosphate-dependent aminotransferase family. Homodimer. Requires pyridoxal 5'-phosphate as cofactor.

It carries out the reaction D-alanine + 2-oxoglutarate = D-glutamate + pyruvate. Functionally, acts on the D-isomers of alanine, leucine, aspartate, glutamate, aminobutyrate, norvaline and asparagine. The enzyme transfers an amino group from a substrate D-amino acid to the pyridoxal phosphate cofactor to form pyridoxamine and an alpha-keto acid in the first half-reaction. The second half-reaction is the reverse of the first, transferring the amino group from the pyridoxamine to a second alpha-keto acid to form the product D-amino acid via a ping-pong mechanism. This is an important process in the formation of D-alanine and D-glutamate, which are essential bacterial cell wall components. This Staphylococcus haemolyticus protein is D-alanine aminotransferase (dat).